An 804-amino-acid polypeptide reads, in one-letter code: Leucine--tRNA ligase (804 aa).

The short motif at 40-51 (PYPSGAGLHVGH) is the 'HIGH' region element. Positions 576 to 580 (KMSKS) match the 'KMSKS' region motif. Residue Lys579 participates in ATP binding.

Belongs to the class-I aminoacyl-tRNA synthetase family.

It localises to the cytoplasm. The catalysed reaction is tRNA(Leu) + L-leucine + ATP = L-leucyl-tRNA(Leu) + AMP + diphosphate. The sequence is that of Leucine--tRNA ligase from Staphylococcus saprophyticus subsp. saprophyticus (strain ATCC 15305 / DSM 20229 / NCIMB 8711 / NCTC 7292 / S-41).